The primary structure comprises 143 residues: Large ribosomal subunit protein uL11 (143 aa).

Belongs to the universal ribosomal protein uL11 family. Part of the ribosomal stalk of the 50S ribosomal subunit. Interacts with L10 and the large rRNA to form the base of the stalk. L10 forms an elongated spine to which L12 dimers bind in a sequential fashion forming a multimeric L10(L12)X complex. Post-translationally, one or more lysine residues are methylated.

Its function is as follows. Forms part of the ribosomal stalk which helps the ribosome interact with GTP-bound translation factors. The chain is Large ribosomal subunit protein uL11 from Paraburkholderia phytofirmans (strain DSM 17436 / LMG 22146 / PsJN) (Burkholderia phytofirmans).